Here is a 241-residue protein sequence, read N- to C-terminus: Eukaryotic translation initiation factor 3 subunit J (241 aa).

The disordered stretch occupies residues 1-97 (MEEDWEQLSE…EEEDMTPEQK (97 aa)). The segment covering 28 to 45 (GEDEEEEVKDSWEDEDEL) has biased composition (acidic residues). The stretch at 31-119 (EEEEVKDSWE…ESDLKNALDT (89 aa)) forms a coiled coil. Composition is skewed to basic and acidic residues over residues 46-58 (EEKK…ETPK) and 69-87 (IADK…RLEK).

This sequence belongs to the eIF-3 subunit J family. In terms of assembly, component of the eukaryotic translation initiation factor 3 (eIF-3) complex.

The protein resides in the cytoplasm. Component of the eukaryotic translation initiation factor 3 (eIF-3) complex, which is involved in protein synthesis of a specialized repertoire of mRNAs and, together with other initiation factors, stimulates binding of mRNA and methionyl-tRNAi to the 40S ribosome. The eIF-3 complex specifically targets and initiates translation of a subset of mRNAs involved in cell proliferation. The polypeptide is Eukaryotic translation initiation factor 3 subunit J (Aedes aegypti (Yellowfever mosquito)).